The chain runs to 76 residues: Protein CsbA (76 aa).

Over 1–5 (MITKA) the chain is Extracellular. Residues 6–22 (VFALFFPFMLVVLFTRV) form a helical membrane-spanning segment. At 23–27 (TFNHY) the chain is on the cytoplasmic side. Residues 28 to 44 (VAIALTAALLFASYLKG) form a helical membrane-spanning segment. The Extracellular portion of the chain corresponds to 45–49 (YTETY). Residues 50 to 66 (FIVGLDVVSLVAGGLYM) traverse the membrane as a helical segment. Residues 67 to 76 (AKKAAEKKEE) are Cytoplasmic-facing.

It localises to the cell membrane. The protein is Protein CsbA (csbA) of Bacillus subtilis (strain 168).